Consider the following 440-residue polypeptide: Xylose isomerase (440 aa).

Catalysis depends on residues histidine 101 and aspartate 104. Glutamate 232, glutamate 268, histidine 271, aspartate 296, aspartate 307, aspartate 309, and aspartate 339 together coordinate Mg(2+).

The protein belongs to the xylose isomerase family. As to quaternary structure, homotetramer. Requires Mg(2+) as cofactor.

The protein localises to the cytoplasm. It carries out the reaction alpha-D-xylose = alpha-D-xylulofuranose. The polypeptide is Xylose isomerase (Salmonella dublin (strain CT_02021853)).